The primary structure comprises 126 residues: SH2 domain-containing protein 1A (126 aa).

In terms of domain architecture, SH2 spans 6–104 (VYHGKISRET…VTPLQYPVEK (99 aa)). The segment at 67–92 (ETAPGVHKRFFRKVKNLISAFQKPDQ) is interaction with FYN SH3 domain. Lys89 carries the post-translational modification N6-acetyllysine. Residues 100 to 126 (YPVEKSSGRGPQAPTGRRDSDICLNAP) form a disordered region.

In terms of assembly, interacts with CD84, CD244, LY9, SLAMF1 and FYN. Interacts with NTRK1, NTRK2 and NTRK3. In terms of tissue distribution, T-cells.

The protein localises to the cytoplasm. Cytoplasmic adapter regulating receptors of the signaling lymphocytic activation molecule (SLAM) family such as SLAMF1, CD244, LY9, CD84, SLAMF6 and SLAMF7. In SLAM signaling seems to cooperate with SH2D1B/EAT-2. Initially it has been proposed that association with SLAMF1 prevents SLAMF1 binding to inhibitory effectors including INPP5D/SHIP1 and PTPN11/SHP-2. However, by simultaneous interactions, recruits FYN which subsequently phosphorylates and activates SLAMF1. Positively regulates CD244/2B4- and CD84-mediated natural killer (NK) cell functions. Can also promote CD48-, SLAMF6 -, LY9-, and SLAMF7-mediated NK cell activation. In the context of NK cell-mediated cytotoxicity enhances conjugate formation with target cells. May also regulate the activity of the neurotrophin receptors NTRK1, NTRK2 and NTRK3. The polypeptide is SH2 domain-containing protein 1A (Sh2d1a) (Mus musculus (Mouse)).